Here is a 486-residue protein sequence, read N- to C-terminus: Kynurenine 3-monooxygenase (486 aa).

A run of 2 helical transmembrane segments spans residues 401–424 (LLFWMMPNTWVPLYNSVSFSHMRY) and 437–459 (ILTRVLYGASIASVAAIGGLCYR).

It belongs to the aromatic-ring hydroxylase family. KMO subfamily. FAD serves as cofactor.

The protein localises to the mitochondrion. It localises to the membrane. The catalysed reaction is L-kynurenine + NADPH + O2 + H(+) = 3-hydroxy-L-kynurenine + NADP(+) + H2O. The protein operates within cofactor biosynthesis; NAD(+) biosynthesis; quinolinate from L-kynurenine: step 1/3. Its function is as follows. Catalyzes the hydroxylation of L-kynurenine (L-Kyn) to form 3-hydroxy-L-kynurenine (L-3OHKyn). Required for synthesis of quinolinic acid. In Anopheles gambiae (African malaria mosquito), this protein is Kynurenine 3-monooxygenase (kh).